A 440-amino-acid polypeptide reads, in one-letter code: Asparagine--tRNA ligase (440 aa).

It belongs to the class-II aminoacyl-tRNA synthetase family. In terms of assembly, homodimer.

Its subcellular location is the cytoplasm. The enzyme catalyses tRNA(Asn) + L-asparagine + ATP = L-asparaginyl-tRNA(Asn) + AMP + diphosphate + H(+). This is Asparagine--tRNA ligase from Chloroflexus aurantiacus (strain ATCC 29364 / DSM 637 / Y-400-fl).